The chain runs to 371 residues: 4-hydroxybenzoate polyprenyltransferase, mitochondrial (371 aa).

A mitochondrion-targeting transit peptide spans 1–45 (MLGSCGAGLVRGLRAETQAWLWGTRGRSLALVHAARGLHAANWQP). At 46 to 83 (SPGQGPRGRPLSLSAAAVVNSAPRPLQPYLRLMRLDKP) the chain is on the mitochondrial matrix side. The helical transmembrane segment at 84-104 (IGTWLLYLPCTWSIGLAADPG) threads the bilayer. Residues 105–108 (CLPD) lie on the Mitochondrial intermembrane side of the membrane. A helical membrane pass occupies residues 109–129 (WYMLSLFGTGAVLMRGAGCTI). Over 130–171 (NDMWDRDYDKKVTRTASRPIAAGDISTFRSFVFLGGQLTLAL) the chain is Mitochondrial matrix. Residues 172-192 (GVLLCLNYYSIALGAASLLLV) form a helical membrane-spanning segment. The Mitochondrial intermembrane portion of the chain corresponds to 193-200 (TTYPLMKR). A helical membrane pass occupies residues 201 to 221 (ITYWPQLALGLTFNWGALLGW). The Mitochondrial matrix segment spans residues 222-231 (SAVKGSCDPS). Residues 232-252 (VCLPLYFSGIMWTLIYDTIYA) form a helical membrane-spanning segment. At 253–277 (HQDKKDDALIGLKSTALLFREDTKK) the chain is on the mitochondrial intermembrane side. Residues 278–298 (WLSGFSVAMLGALSLVGVNSG) traverse the membrane as a helical segment. The Mitochondrial matrix portion of the chain corresponds to 299–300 (QT). Residues 301–321 (MPYYTALAAVGAHLAHQIYTL) traverse the membrane as a helical segment. At 322–332 (DINRPEDCWEK) the chain is on the mitochondrial intermembrane side. The helical transmembrane segment at 333–353 (FTSNRTIGLIIFLGIVLGNLC) threads the bilayer. Residues 354–371 (KAKETDKTRKNIENRMEN) are Mitochondrial matrix-facing.

This sequence belongs to the UbiA prenyltransferase family. Mg(2+) serves as cofactor.

Its subcellular location is the mitochondrion inner membrane. The catalysed reaction is an all-trans-polyprenyl diphosphate + 4-hydroxybenzoate = a 4-hydroxy-3-(all-trans-polyprenyl)benzoate + diphosphate. It carries out the reaction all-trans-decaprenyl diphosphate + 4-hydroxybenzoate = 4-hydroxy-3-(all-trans-decaprenyl)benzoate + diphosphate. It catalyses the reaction all-trans-nonaprenyl diphosphate + 4-hydroxybenzoate = 4-hydroxy-3-(all-trans-nonaprenyl)benzoate + diphosphate. It participates in cofactor biosynthesis; ubiquinone biosynthesis. Mediates the second step in the final reaction sequence of coenzyme Q (CoQ) biosynthesis. Catalyzes the prenylation of para-hydroxybenzoate (PHB) with an all-trans polyprenyl donor (such as all-trans-decaprenyl diphosphate). The length of the polyprenyl side chain varies depending on the species, in humans, the side chain is comprised of 10 isoprenyls (decaprenyl) producing CoQ10 (also known as ubiquinone), whereas rodents predominantly generate CoQ9. However, this specificity is not complete, human tissues have low amounts of CoQ9 and rodent organs contain some CoQ10. Plays a central role in the biosynthesis of CoQ10. CoQ10 is a vital molecule that transports electrons from mitochondrial respiratory chain complexes. CoQs also function as cofactors for uncoupling protein and play a role as regulators of the extracellularly-induced ceramide-dependent apoptotic pathway. Regulates mitochondrial permeability transition pore (mPTP) opening and ROS production (pivotal events in cell death) in a tissue specific manner. The polypeptide is 4-hydroxybenzoate polyprenyltransferase, mitochondrial (Bos taurus (Bovine)).